A 206-amino-acid chain; its full sequence is Peptidyl-tRNA hydrolase (206 aa).

Position 14 (tyrosine 14) interacts with tRNA. Residue histidine 19 is the Proton acceptor of the active site. TRNA contacts are provided by tyrosine 64, asparagine 66, and asparagine 112.

Belongs to the PTH family. Monomer.

Its subcellular location is the cytoplasm. It catalyses the reaction an N-acyl-L-alpha-aminoacyl-tRNA + H2O = an N-acyl-L-amino acid + a tRNA + H(+). In terms of biological role, hydrolyzes ribosome-free peptidyl-tRNAs (with 1 or more amino acids incorporated), which drop off the ribosome during protein synthesis, or as a result of ribosome stalling. Functionally, catalyzes the release of premature peptidyl moieties from peptidyl-tRNA molecules trapped in stalled 50S ribosomal subunits, and thus maintains levels of free tRNAs and 50S ribosomes. The sequence is that of Peptidyl-tRNA hydrolase from Rhodopseudomonas palustris (strain ATCC BAA-98 / CGA009).